Here is a 122-residue protein sequence, read N- to C-terminus: Large ribosomal subunit protein uL14 (122 aa).

It belongs to the universal ribosomal protein uL14 family. As to quaternary structure, part of the 50S ribosomal subunit. Forms a cluster with proteins L3 and L19. In the 70S ribosome, L14 and L19 interact and together make contacts with the 16S rRNA in bridges B5 and B8.

Binds to 23S rRNA. Forms part of two intersubunit bridges in the 70S ribosome. This is Large ribosomal subunit protein uL14 from Ligilactobacillus salivarius (strain UCC118) (Lactobacillus salivarius).